The sequence spans 77 residues: Delta-conotoxin GmVIA (77 aa).

Positions 1-22 are cleaved as a signal peptide; the sequence is MKLTCMMIVAVLFLTAWTFVTA. Positions 23–48 are excised as a propeptide; that stretch reads DDSGNGMEILFPKAGHEMENLEVSNR. Cystine bridges form between Cys52–Cys67, Cys59–Cys72, and Cys66–Cys76.

Belongs to the conotoxin O1 superfamily. Expressed by the venom duct.

It localises to the secreted. In terms of biological role, delta-conotoxins bind to site 6 of voltage-gated sodium channels (Nav) and inhibit the inactivation process. This toxin shows weak activity on rNav1.2/SCN2A (EC(50)=2.5 uM) and rNav1.4/SCN4A (EC(50)=4.8 uM). In vivo, injection of this peptide in the head region of garden snail induces retraction of the head and body into shell. This is followed by secretion of viscous green slime and a convulsive undulation into and out of the shell. No apparent biological activity was observed when a much greater dose of peptide was injected intraperitoneally into mice. This chain is Delta-conotoxin GmVIA, found in Conus gloriamaris (Glory-of-the-Sea cone).